The chain runs to 120 residues: Immunoglobulin kappa variable 2-112 (120 aa).

A signal peptide spans 1-20 (MRCSLQFLGVLMFWISGVSG). Residues 21–43 (DIVITQDELSNPVTSGESVSISC) are framework-1. A disulfide bond links Cys43 and Cys113. Positions 44–59 (RSSKSLLYKDGKTYLN) are complementarity-determining-1. The interval 60–74 (WFLQRPGQSPQLLIY) is framework-2. The tract at residues 75–81 (LMSTRAS) is complementarity-determining-2. Residues 82-113 (GVSDRFSGSGSGTDFTLEISRVKAEDVGVYYC) form a framework-3 region. The segment at 114–120 (QQLVEYP) is complementarity-determining-3.

The chain is Immunoglobulin kappa variable 2-112 from Mus musculus (Mouse).